The primary structure comprises 862 residues: Axin-1 (862 aa).

The interval Met1–Pro78 is disordered. The short motif at Ala20–Glu29 is the Tankyrase-binding motif element. 2 positions are modified to phosphoserine; by CK1: Ser75 and Ser77. Positions Ser88–Thr211 constitute an RGS domain. The tract at residues Glu209–Ser338 is interaction with TP53. Disordered stretches follow at residues Ser215–Gly289 and Thr316–Pro344. Ser217 carries the phosphoserine; by CK1 modification. Positions Asn242 to Gly258 are enriched in acidic residues. A compositionally biased stretch (low complexity) spans Ser325–Ser339. The tract at residues Ile348–Gly433 is interaction with GSK3B. The interaction with SIAH1 and SIAH2 stretch occupies residues Arg353–Glu411. The disordered stretch occupies residues Leu413–Ala441. Residues Ser429–Ala441 show a composition bias toward pro residues. Residues Pro434 to Met502 form an interaction with CTNNB1 region. Ser469 carries the phosphoserine; by CK1 modification. Residues Arg480 to Ala500 are disordered. Residue Thr481 is modified to Phosphothreonine; by GSK3-beta. Residues Ser486, Ser493, and Ser511 each carry the phosphoserine modification. An interaction with RNF111 region spans residues Gly507 to Ser757. Positions His531–Ala544 are enriched in basic residues. Disordered stretches follow at residues His531–Asn629 and Lys641–Leu679. The span at Arg545 to Arg556 shows a compositional bias: basic and acidic residues. Residues Ser575–Phe789 are interaction with PPP2CA. The residue at position 581 (Ser581) is a Phosphoserine. The interaction with HIPK2 stretch occupies residues Pro677–Val752. The region spanning Cys780–Asp862 is the DIX domain. Glycyl lysine isopeptide (Lys-Gly) (interchain with G-Cter in SUMO) cross-links involve residues Lys857 and Lys860.

In terms of assembly, homodimer. Interacts with ZBED3; the interaction is direct, enhanced by protein kinase GSK3B and casein kinase CSNK1E activities and decreases GSK3B-induced beta-catenin serine and threonine phosphorylations. Component of the beta-catenin destruction complex, containing at least, CTNNB1, an axin and GSK3B, that regulates CTNNB1 protein levels through phosphorylation and ubiquitination. Interacts with CTNNB1 (via the armadillo repeats 2-7). Interacts with GSK3B; the interaction hyperphosphorylates CTNNB1 leading to its ubiquitination and destruction. Component of the AXIN1-HIPK2-TP53 complex. Interacts directly in the complex with TP53 and HIPK2. Interacts with DAXX; the interaction stimulates the interaction of DAXX with TP53, stimulates 'Ser-46' phosphorylation of TP53 and induces cell death on UV irradiation. Also binds APC, SMAD6, SMAD7 and RNF111. Interacts with DIXDC1; prevents interaction with MAP3K1. Interacts with MAP3K4. Interacts with ANKRD6 and AIDA. Interacts with MDFI; the interaction decreases AXIN1-mediated JUN N-terminal kinase (JNK) activation. Interacts with MDFIC; the interaction inhibits beta-cateninin-mediated signaling and AXIN1-mediated JUN N-terminal kinase (JNK) activation. Interacts with LRP5 (via its phosphorylated PPPSP motifs); the interaction is stimulated by WNT1 and GSK3B and activates beta-catenin signaling. Interacts (via the C-terminal) with PPP1CA; the interaction dephosphorylates AXIN1 and regulates interaction with GSK3B. Interacts with PPP2CA; the interaction dephosphorylates AXIN1. Interacts with MACF1. Found in a complex composed of MACF1, APC, AXIN1, CTNNB1 and GSK3B. Interacts with TNKS. Interacts with DAB2; the interaction is mutually exclusive with the AXIN1:PPP1CA interaction. Interacts with WDR26. Interacts with GID8. Interacts with SIAH1 and SIAH2; both probably catalyze AXIN1 ubiquitination and subsequent proteasome-mediated ubiquitin-dependent degradation. Interaction with GSK3B and AXIN1 is competitive. Phosphorylation and dephosphorylation of AXIN1 regulates assembly and function of the beta-catenin complex. Phosphorylated by CK1 and GSK3B. Dephosphorylated by PPP1CA and PPP2CA. Phosphorylation by CK1 enhances binding of GSK3B to AXIN1. Post-translationally, ADP-ribosylated by tankyrase TNKS and TNKS2. Poly-ADP-ribosylated protein is recognized by RNF146, followed by ubiquitination at 'Lys-48' and subsequent activation of the Wnt signaling pathway. In terms of processing, ubiquitinated by RNF146 when poly-ADP-ribosylated, leading to its degradation and subsequent activation of the Wnt signaling pathway. Sumoylation at Lys-857 and Lys-860 prevents ubiquitination and degradation. Sumoylation is required for AXIN1-mediated JNK activation. Deubiquitinated by USP34, deubiquitinated downstream of beta-catenin stabilization step: deubiquitination is important for nuclear accumulation during Wnt signaling to positively regulate beta-catenin (CTNBB1)-mediated transcription. Ubiquitination by SIAH1 and SIAH2 induces its proteasomal degradation as part of the activation of the Wnt signaling pathway. As to expression, ubiquitously expressed.

It localises to the cytoplasm. The protein resides in the nucleus. The protein localises to the membrane. It is found in the cell membrane. In terms of biological role, component of the beta-catenin destruction complex required for regulating CTNNB1 levels through phosphorylation and ubiquitination, and modulating Wnt-signaling. Controls dorsoventral patterning via two opposing effects; down-regulates CTNNB1 to inhibit the Wnt signaling pathway and ventralize embryos, but also dorsalizes embryos by activating a Wnt-independent JNK signaling pathway. In Wnt signaling, probably facilitates the phosphorylation of CTNNB1 and APC by GSK3B. Likely to function as a tumor suppressor. Enhances TGF-beta signaling by recruiting the RNF111 E3 ubiquitin ligase and promoting the degradation of inhibitory SMAD7. Also a component of the AXIN1-HIPK2-TP53 complex which controls cell growth, apoptosis and development. Facilitates the phosphorylation of TP53 by HIPK2 upon ultraviolet irradiation. This chain is Axin-1 (AXIN1), found in Homo sapiens (Human).